The chain runs to 700 residues: Constitutive coactivator of peroxisome proliferator-activated receptor gamma (700 aa).

This sequence belongs to the constitutive coactivator of PPAR-gamma family. As to quaternary structure, interacts with ESR1 and RXRA. Interacts with PPARG; in a ligand-independent manner.

The protein resides in the nucleus. Functions as a transactivator of PPARG and ESR1. Functions in adipogenesis through PPARG activation. In Bos taurus (Bovine), this protein is Constitutive coactivator of peroxisome proliferator-activated receptor gamma (FAM120B).